Consider the following 74-residue polypeptide: Small ribosomal subunit protein bS18 (74 aa).

It belongs to the bacterial ribosomal protein bS18 family. In terms of assembly, part of the 30S ribosomal subunit. Forms a tight heterodimer with protein bS6.

In terms of biological role, binds as a heterodimer with protein bS6 to the central domain of the 16S rRNA, where it helps stabilize the platform of the 30S subunit. In Chlorobaculum tepidum (strain ATCC 49652 / DSM 12025 / NBRC 103806 / TLS) (Chlorobium tepidum), this protein is Small ribosomal subunit protein bS18.